A 395-amino-acid chain; its full sequence is ETS-related transcription factor Elf-3 (395 aa).

Residues 69-155 (EPPAVLHLAE…AQLRDLTSSS (87 aa)) form the PNT domain. A compositionally biased stretch (low complexity) spans 200–240 (ASPYYGSSYGPGAPSPGSSDFSTSGTDTPQSSHSSDSGGSD). The disordered stretch occupies residues 200-275 (ASPYYGSSYG…HGKRKRGRPR (76 aa)). The span at 246-265 (TDSKVFPRDGFPDYKKGEPK) shows a compositional bias: basic and acidic residues. The span at 266 to 275 (HGKRKRGRPR) shows a compositional bias: basic residues. The segment at residues 297-379 (THLWEFIRDI…DGRRLVYKFG (83 aa)) is a DNA-binding region (ETS).

The protein belongs to the ETS family. Interacts with TBP. Interacts with CREBBP and EP300; these act as transcriptional coactivators of ELF3 and positively modulate its function. Interacts with XRCC5/KU86 and XRCC6/KU70; these inhibit the ability of ELF3 to bind DNA and negatively modulate its transcriptional activity. Associated with CLND7 and POU2F3. Interacts with ZNF768.

Its subcellular location is the cytoplasm. The protein localises to the nucleus. Its function is as follows. Transcriptional activator that binds and transactivates ETS sequences containing the consensus nucleotide core sequence GGA[AT]. Acts synergistically with POU2F3 to transactivate the SPRR2A promoter and with RUNX1 to transactivate the ANGPT1 promoter. Also transactivates collagenase, CCL20, CLND7, FLG, KRT8, NOS2, PTGS2, SPRR2B, TGFBR2 and TGM3 promoters. Represses KRT4 promoter activity. Involved in mediating vascular inflammation. May play an important role in epithelial cell differentiation and tumorigenesis. May be a critical downstream effector of the ERBB2 signaling pathway. May be associated with mammary gland development and involution. Plays an important role in the regulation of transcription with TATA-less promoters in preimplantation embryos, which is essential in preimplantation development. In Rattus norvegicus (Rat), this protein is ETS-related transcription factor Elf-3.